The sequence spans 109 residues: Large ribosomal subunit protein uL22 (109 aa).

It belongs to the universal ribosomal protein uL22 family. Part of the 50S ribosomal subunit.

Its function is as follows. This protein binds specifically to 23S rRNA; its binding is stimulated by other ribosomal proteins, e.g. L4, L17, and L20. It is important during the early stages of 50S assembly. It makes multiple contacts with different domains of the 23S rRNA in the assembled 50S subunit and ribosome. The globular domain of the protein is located near the polypeptide exit tunnel on the outside of the subunit, while an extended beta-hairpin is found that lines the wall of the exit tunnel in the center of the 70S ribosome. This chain is Large ribosomal subunit protein uL22, found in Paraburkholderia phymatum (strain DSM 17167 / CIP 108236 / LMG 21445 / STM815) (Burkholderia phymatum).